We begin with the raw amino-acid sequence, 226 residues long: Uracil-DNA glycosylase (226 aa).

Residue Asp64 is the Proton acceptor of the active site.

Belongs to the uracil-DNA glycosylase (UDG) superfamily. UNG family.

The protein resides in the cytoplasm. The enzyme catalyses Hydrolyzes single-stranded DNA or mismatched double-stranded DNA and polynucleotides, releasing free uracil.. Excises uracil residues from the DNA which can arise as a result of misincorporation of dUMP residues by DNA polymerase or due to deamination of cytosine. The polypeptide is Uracil-DNA glycosylase (Vibrio parahaemolyticus serotype O3:K6 (strain RIMD 2210633)).